We begin with the raw amino-acid sequence, 549 residues long: Alanine aminotransferase 2-like (549 aa).

An N6-(pyridoxal phosphate)lysine modification is found at lysine 367.

Belongs to the class-I pyridoxal-phosphate-dependent aminotransferase family. Alanine aminotransferase subfamily. As to quaternary structure, homodimer. Requires pyridoxal 5'-phosphate as cofactor.

It carries out the reaction L-alanine + 2-oxoglutarate = pyruvate + L-glutamate. The protein operates within amino-acid degradation; L-alanine degradation via transaminase pathway; pyruvate from L-alanine: step 1/1. In terms of biological role, catalyzes the reversible transamination between alanine and 2-oxoglutarate to form pyruvate and glutamate. In Danio rerio (Zebrafish), this protein is Alanine aminotransferase 2-like (gpt2l).